We begin with the raw amino-acid sequence, 239 residues long: Ribonuclease 3 (239 aa).

Residues 11-133 (HTAIQKKLGY…MFAAVSFDAD (123 aa)) enclose the RNase III domain. E46 is a binding site for Mg(2+). The active site involves D50. Positions 119 and 122 each coordinate Mg(2+). The active site involves E122. The DRBM domain occupies 160 to 230 (DGKTALQEAL…AKEALKWLEE (71 aa)).

This sequence belongs to the ribonuclease III family. In terms of assembly, homodimer. The cofactor is Mg(2+).

The protein resides in the cytoplasm. The enzyme catalyses Endonucleolytic cleavage to 5'-phosphomonoester.. Digests double-stranded RNA. Involved in the processing of primary rRNA transcript to yield the immediate precursors to the large and small rRNAs (23S and 16S). Processes some mRNAs, and tRNAs when they are encoded in the rRNA operon. Processes pre-crRNA and tracrRNA of type II CRISPR loci if present in the organism. This Neisseria gonorrhoeae (strain NCCP11945) protein is Ribonuclease 3.